A 359-amino-acid polypeptide reads, in one-letter code: Isopentenyl-diphosphate delta-isomerase (359 aa).

12-13 contributes to the substrate binding site; it reads RK. FMN-binding positions include S68, 69 to 71, S99, and N128; that span reads AMT. 99–101 is a substrate binding site; sequence SQR. Q162 serves as a coordination point for substrate. E163 contributes to the Mg(2+) binding site. Residues K194, T224, 277 to 279, and 298 to 299 contribute to the FMN site; these read GIR and AL.

It belongs to the IPP isomerase type 2 family. As to quaternary structure, homooctamer. Dimer of tetramers. The cofactor is FMN. It depends on NADPH as a cofactor. Mg(2+) serves as cofactor.

The protein localises to the cytoplasm. The catalysed reaction is isopentenyl diphosphate = dimethylallyl diphosphate. Involved in the biosynthesis of isoprenoids. Catalyzes the 1,3-allylic rearrangement of the homoallylic substrate isopentenyl (IPP) to its allylic isomer, dimethylallyl diphosphate (DMAPP). The sequence is that of Isopentenyl-diphosphate delta-isomerase from Methanoregula boonei (strain DSM 21154 / JCM 14090 / 6A8).